The following is a 377-amino-acid chain: GTPase Obg (377 aa).

The 159-residue stretch at 1 to 159 folds into the Obg domain; the sequence is MKFVDEATIE…RRLRMELKVL (159 aa). The tract at residues 127–148 is disordered; the sequence is NIHFKSSTNRAPRQWTPGKEGE. The OBG-type G domain maps to 160 to 336; sequence ADVGLLGLPN…LIWALQDYLD (177 aa). Residues 166–173, 191–195, 213–216, 288–291, and 317–319 each bind GTP; these read GLPNAGKS, FTTLH, DIPG, NKLD, and SGL. Mg(2+) is bound by residues S173 and T193. The disordered stretch occupies residues 339-377; the sequence is KRKDQDAQDQADGTYVFEDPRFDASRGGAAPATPPGGDE.

Belongs to the TRAFAC class OBG-HflX-like GTPase superfamily. OBG GTPase family. In terms of assembly, monomer. The cofactor is Mg(2+).

Its subcellular location is the cytoplasm. Its function is as follows. An essential GTPase which binds GTP, GDP and possibly (p)ppGpp with moderate affinity, with high nucleotide exchange rates and a fairly low GTP hydrolysis rate. Plays a role in control of the cell cycle, stress response, ribosome biogenesis and in those bacteria that undergo differentiation, in morphogenesis control. This chain is GTPase Obg, found in Bordetella bronchiseptica (strain ATCC BAA-588 / NCTC 13252 / RB50) (Alcaligenes bronchisepticus).